Reading from the N-terminus, the 505-residue chain is Midnolin (505 aa).

Residues 32–106 (MSLAIHSTTG…LTLVPTVEAG (75 aa)) form the Ubiquitin-like domain. Disordered stretches follow at residues 155 to 176 (PWHR…VSDF), 228 to 305 (SIAT…SRKP), and 440 to 485 (RLRR…GLDF). Over residues 238-262 (RPVSSAARVPPVSSSPSSPVSPSPV) the composition is skewed to low complexity. Residues 263–282 (TAGTFQSHAASTTCPEQTDC) show a composition bias toward polar residues. A compositionally biased stretch (low complexity) spans 283 to 300 (SPPASSNTTSTPGSSPTP).

Interacts with GCK; the interaction occurs preferentially at low glucose levels. Interacts with the proteasome.

It localises to the nucleus. The protein resides in the cytoplasm. Its subcellular location is the cytosol. It is found in the nucleolus. Its function is as follows. Facilitates the ubiquitin-independent proteasomal degradation of stimulus-induced transcription factors such as FOSB, EGR1, NR4A1, and IRF4 to the proteasome for degradation. Promotes also the degradation of other substrates such as CBX4. Plays a role in inhibiting the activity of glucokinase GCK and both glucose-induced and basal insulin secretion. This chain is Midnolin, found in Rattus norvegicus (Rat).